Here is a 30-residue protein sequence, read N- to C-terminus: Cytochrome c oxidase subunit 5C (30 aa).

A helical membrane pass occupies residues 15–30; the sequence is VVKELVIXXXLGLXAG.

This sequence belongs to the cytochrome c oxidase subunit 5C family.

It is found in the mitochondrion inner membrane. In terms of biological role, this protein is one of the nuclear-coded polypeptide chains of cytochrome c oxidase, the terminal oxidase in mitochondrial electron transport. The chain is Cytochrome c oxidase subunit 5C (COX5C) from Solanum tuberosum (Potato).